Here is a 235-residue protein sequence, read N- to C-terminus: Phosphoribosylaminoimidazole-succinocarboxamide synthase (235 aa).

Belongs to the SAICAR synthetase family.

The enzyme catalyses 5-amino-1-(5-phospho-D-ribosyl)imidazole-4-carboxylate + L-aspartate + ATP = (2S)-2-[5-amino-1-(5-phospho-beta-D-ribosyl)imidazole-4-carboxamido]succinate + ADP + phosphate + 2 H(+). The protein operates within purine metabolism; IMP biosynthesis via de novo pathway; 5-amino-1-(5-phospho-D-ribosyl)imidazole-4-carboxamide from 5-amino-1-(5-phospho-D-ribosyl)imidazole-4-carboxylate: step 1/2. The polypeptide is Phosphoribosylaminoimidazole-succinocarboxamide synthase (Prosthecochloris aestuarii (strain DSM 271 / SK 413)).